Consider the following 369-residue polypeptide: Small ribosomal subunit biogenesis GTPase RsgA (369 aa).

Residues 116-271 (GEQLIAANLD…LIDNPGIREI (156 aa)) form the CP-type G domain. GTP contacts are provided by residues 161–164 (NKID) and 213–221 (GSSGVGKST). Positions 294, 299, 301, and 307 each coordinate Zn(2+).

It belongs to the TRAFAC class YlqF/YawG GTPase family. RsgA subfamily. Monomer. Associates with 30S ribosomal subunit, binds 16S rRNA. It depends on Zn(2+) as a cofactor.

It is found in the cytoplasm. Functionally, one of several proteins that assist in the late maturation steps of the functional core of the 30S ribosomal subunit. Helps release RbfA from mature subunits. May play a role in the assembly of ribosomal proteins into the subunit. Circularly permuted GTPase that catalyzes slow GTP hydrolysis, GTPase activity is stimulated by the 30S ribosomal subunit. The protein is Small ribosomal subunit biogenesis GTPase RsgA of Methanosarcina acetivorans (strain ATCC 35395 / DSM 2834 / JCM 12185 / C2A).